The sequence spans 314 residues: tRNA-cytidine(32) 2-sulfurtransferase (314 aa).

Positions 49 to 54 (SGGKDS) match the PP-loop motif motif. The [4Fe-4S] cluster site is built by C124, C127, and C215.

The protein belongs to the TtcA family. As to quaternary structure, homodimer. Requires Mg(2+) as cofactor. The cofactor is [4Fe-4S] cluster.

The protein resides in the cytoplasm. It catalyses the reaction cytidine(32) in tRNA + S-sulfanyl-L-cysteinyl-[cysteine desulfurase] + AH2 + ATP = 2-thiocytidine(32) in tRNA + L-cysteinyl-[cysteine desulfurase] + A + AMP + diphosphate + H(+). It functions in the pathway tRNA modification. In terms of biological role, catalyzes the ATP-dependent 2-thiolation of cytidine in position 32 of tRNA, to form 2-thiocytidine (s(2)C32). The sulfur atoms are provided by the cysteine/cysteine desulfurase (IscS) system. The chain is tRNA-cytidine(32) 2-sulfurtransferase from Pasteurella multocida (strain Pm70).